A 250-amino-acid polypeptide reads, in one-letter code: Pyrroloquinoline-quinone synthase (250 aa).

Belongs to the PqqC family.

It catalyses the reaction 6-(2-amino-2-carboxyethyl)-7,8-dioxo-1,2,3,4,7,8-hexahydroquinoline-2,4-dicarboxylate + 3 O2 = pyrroloquinoline quinone + 2 H2O2 + 2 H2O + H(+). It participates in cofactor biosynthesis; pyrroloquinoline quinone biosynthesis. Ring cyclization and eight-electron oxidation of 3a-(2-amino-2-carboxyethyl)-4,5-dioxo-4,5,6,7,8,9-hexahydroquinoline-7,9-dicarboxylic-acid to PQQ. The sequence is that of Pyrroloquinoline-quinone synthase from Xanthomonas oryzae pv. oryzae (strain KACC10331 / KXO85).